A 529-amino-acid chain; its full sequence is Peptide chain release factor 3 (529 aa).

Positions Ala11–Met280 constitute a tr-type G domain. GTP is bound by residues Ser20–Thr27, Asp88–His92, and Asn142–Asp145.

This sequence belongs to the TRAFAC class translation factor GTPase superfamily. Classic translation factor GTPase family. PrfC subfamily.

It is found in the cytoplasm. Functionally, increases the formation of ribosomal termination complexes and stimulates activities of RF-1 and RF-2. It binds guanine nucleotides and has strong preference for UGA stop codons. It may interact directly with the ribosome. The stimulation of RF-1 and RF-2 is significantly reduced by GTP and GDP, but not by GMP. The protein is Peptide chain release factor 3 of Shigella boydii serotype 18 (strain CDC 3083-94 / BS512).